Consider the following 431-residue polypeptide: Enolase (431 aa).

(2R)-2-phosphoglycerate is bound at residue Gln-167. Glu-209 (proton donor) is an active-site residue. Mg(2+) contacts are provided by Asp-246, Glu-289, and Asp-316. Lys-341, Arg-370, Ser-371, and Lys-392 together coordinate (2R)-2-phosphoglycerate. The active-site Proton acceptor is Lys-341.

The protein belongs to the enolase family. As to quaternary structure, component of the RNA degradosome, a multiprotein complex involved in RNA processing and mRNA degradation. Requires Mg(2+) as cofactor.

It localises to the cytoplasm. The protein resides in the secreted. It is found in the cell surface. It carries out the reaction (2R)-2-phosphoglycerate = phosphoenolpyruvate + H2O. The protein operates within carbohydrate degradation; glycolysis; pyruvate from D-glyceraldehyde 3-phosphate: step 4/5. Catalyzes the reversible conversion of 2-phosphoglycerate (2-PG) into phosphoenolpyruvate (PEP). It is essential for the degradation of carbohydrates via glycolysis. This chain is Enolase, found in Hahella chejuensis (strain KCTC 2396).